Consider the following 445-residue polypeptide: Tubulin beta-1 chain (445 aa).

8 residues coordinate GTP: Gln-11, Glu-69, Ser-138, Gly-142, Thr-143, Gly-144, Asn-204, and Asn-226. Glu-69 contributes to the Mg(2+) binding site. The disordered stretch occupies residues 426-445 (QDATAEDEEEYEDEEEEMAA). Residues 429–445 (TAEDEEEYEDEEEEMAA) are compositionally biased toward acidic residues.

This sequence belongs to the tubulin family. Dimer of alpha and beta chains. A typical microtubule is a hollow water-filled tube with an outer diameter of 25 nm and an inner diameter of 15 nM. Alpha-beta heterodimers associate head-to-tail to form protofilaments running lengthwise along the microtubule wall with the beta-tubulin subunit facing the microtubule plus end conferring a structural polarity. Microtubules usually have 13 protofilaments but different protofilament numbers can be found in some organisms and specialized cells. Mg(2+) serves as cofactor.

It is found in the cytoplasm. The protein localises to the cytoskeleton. Tubulin is the major constituent of microtubules, a cylinder consisting of laterally associated linear protofilaments composed of alpha- and beta-tubulin heterodimers. Microtubules grow by the addition of GTP-tubulin dimers to the microtubule end, where a stabilizing cap forms. Below the cap, tubulin dimers are in GDP-bound state, owing to GTPase activity of alpha-tubulin. This chain is Tubulin beta-1 chain (TUBB1), found in Eleusine indica (Goosegrass).